The chain runs to 218 residues: tRNA (cytidine(56)-2'-O)-methyltransferase (218 aa).

S-adenosyl-L-methionine contacts are provided by residues Leu-81, 106-110, and 124-131; these read GAEKV and IGNQPHSE. The segment at 170-218 is disordered; that stretch reads KVGEEGPSGGAPGVRAERGRGGRGEGVQGADEVRGHKRGATDRDLGDET. The segment covering 200 to 218 has biased composition (basic and acidic residues); that stretch reads DEVRGHKRGATDRDLGDET.

The protein belongs to the aTrm56 family. In terms of assembly, homodimer.

It localises to the cytoplasm. It catalyses the reaction cytidine(56) in tRNA + S-adenosyl-L-methionine = 2'-O-methylcytidine(56) in tRNA + S-adenosyl-L-homocysteine + H(+). In terms of biological role, specifically catalyzes the AdoMet-dependent 2'-O-ribose methylation of cytidine at position 56 in tRNAs. The protein is tRNA (cytidine(56)-2'-O)-methyltransferase of Ignicoccus hospitalis (strain KIN4/I / DSM 18386 / JCM 14125).